The primary structure comprises 544 residues: MTTPAGSGTGFGSVSWWGLSPAVDLQAESPPVDPDSQAETEHETPELNVLLLGSVDGRHLLRTLARAALWPRRRFHFYVLENNLEAVARHILIFSLALEDPEKMGLQERSETFLEVWGNALLRPPVAAFVRAQAGRLAHLVPEPDRLAEQLPWLSLGALKFRERDALEAVFRFWAGGEKGPEAFPMSRLWDSRLRQYLGSRYDARHGVSDWDLHMKLHDRGARVIHTREFRRWRDTGVAFELRDSSAYHVPNRTLASGRLLSHRGERVAARGYWGDIATGPFVAFGIEADDETLLRTSNGQPVKTACEITEHNVAELFREMAAWGHPRAAEGDPEQVQGGAEGSSEPAAPAPEPFTVHFLSLDSAHTLHHKSCYMGQFQLLYVACGMVHLLSAELGACVAPGGRLIVELAQFLVDLRQEQLQAFSSRVGELAQAAGFAPQLGGKPSDTFARFYKAGDSAPGHEDPAVESGTPPPEVLAPPLEATDPPSEDRTQPLESGNPPSEPLKLTSESQASLLEASVPPTGSQAPKSENQTVPPETKYPIP.

2 disordered regions span residues 328–350 (RAAEGDPEQVQGGAEGSSEPAAP) and 448–544 (TFAR…YPIP). Over residues 522 to 536 (PTGSQAPKSENQTVP) the composition is skewed to polar residues.

It belongs to the DNAAF3 family.

The protein resides in the cytoplasm. It is found in the dynein axonemal particle. Required for the assembly of axonemal inner and outer dynein arms. Involved in preassembly of dyneins into complexes before their transport into cilia. The protein is Dynein axonemal assembly factor 3 (DNAAF3) of Bos taurus (Bovine).